We begin with the raw amino-acid sequence, 122 residues long: Large ribosomal subunit protein uL14 (122 aa).

It belongs to the universal ribosomal protein uL14 family. As to quaternary structure, part of the 50S ribosomal subunit. Forms a cluster with proteins L3 and L19. In the 70S ribosome, L14 and L19 interact and together make contacts with the 16S rRNA in bridges B5 and B8.

Functionally, binds to 23S rRNA. Forms part of two intersubunit bridges in the 70S ribosome. This Campylobacter concisus (strain 13826) protein is Large ribosomal subunit protein uL14.